The chain runs to 286 residues: General stress protein A (286 aa).

UDP-binding positions include 12–17 and 111–112; these read CADDNY and DC. Aspartate 111, aspartate 113, and histidine 247 together coordinate Mn(2+). 247–253 is a UDP binding site; sequence HFCGGEK.

This sequence belongs to the glycosyltransferase 8 family.

This Bacillus subtilis (strain 168) protein is General stress protein A (gspA).